The primary structure comprises 809 residues: Penicillin-binding protein 1A (809 aa).

The Cytoplasmic segment spans residues 1–34; it reads MSDNTKTNSRNKSVKRTKKVKKKKKFGFFKKLFT. A helical; Signal-anchor for type II membrane protein transmembrane segment spans residues 35 to 55; it reads ILFCLFILLSVAASGVIFAIV. Topologically, residues 56 to 809 are extracellular; it reads KTSPNLDING…PNNNTTNTNK (754 aa). The segment at 74 to 251 is transglycosylase; sequence SQLYDDNNNP…PSAYYPFSQN (178 aa). Glu-113 (proton donor; for transglycosylase activity) is an active-site residue. A transpeptidase region spans residues 381–664; it reads AAATLFDYHT…VAEIWGEIMK (284 aa). Ser-422 serves as the catalytic Acyl-ester intermediate; for transpeptidase activity. The segment at 694-809 is disordered; that stretch reads SPSNLSGDDS…PNNNTTNTNK (116 aa).

It in the N-terminal section; belongs to the glycosyltransferase 51 family. In the C-terminal section; belongs to the transpeptidase family.

The protein localises to the cell membrane. The enzyme catalyses [GlcNAc-(1-&gt;4)-Mur2Ac(oyl-L-Ala-gamma-D-Glu-L-Lys-D-Ala-D-Ala)](n)-di-trans,octa-cis-undecaprenyl diphosphate + beta-D-GlcNAc-(1-&gt;4)-Mur2Ac(oyl-L-Ala-gamma-D-Glu-L-Lys-D-Ala-D-Ala)-di-trans,octa-cis-undecaprenyl diphosphate = [GlcNAc-(1-&gt;4)-Mur2Ac(oyl-L-Ala-gamma-D-Glu-L-Lys-D-Ala-D-Ala)](n+1)-di-trans,octa-cis-undecaprenyl diphosphate + di-trans,octa-cis-undecaprenyl diphosphate + H(+). It catalyses the reaction Preferential cleavage: (Ac)2-L-Lys-D-Ala-|-D-Ala. Also transpeptidation of peptidyl-alanyl moieties that are N-acyl substituents of D-alanine.. It participates in cell wall biogenesis; peptidoglycan biosynthesis. Cell wall formation. Synthesis of cross-linked peptidoglycan from the lipid intermediates. The enzyme has a penicillin-insensitive transglycosylase N-terminal domain (formation of linear glycan strands) and a penicillin-sensitive transpeptidase C-terminal domain (cross-linking of the peptide subunits). This chain is Penicillin-binding protein 1A (pbpA), found in Clostridium acetobutylicum (strain ATCC 824 / DSM 792 / JCM 1419 / IAM 19013 / LMG 5710 / NBRC 13948 / NRRL B-527 / VKM B-1787 / 2291 / W).